The primary structure comprises 113 residues: UPF0482 protein YnfB (113 aa).

Residues 1 to 28 (MKITLSKRIGLLAILLPCALALSTTVHA) form the signal peptide.

This sequence belongs to the UPF0482 family.

The polypeptide is UPF0482 protein YnfB (Escherichia coli O8 (strain IAI1)).